The chain runs to 143 residues: 3-hydroxyacyl-[acyl-carrier-protein] dehydratase FabZ (143 aa).

The active site involves H47.

This sequence belongs to the thioester dehydratase family. FabZ subfamily.

It localises to the cytoplasm. It carries out the reaction a (3R)-hydroxyacyl-[ACP] = a (2E)-enoyl-[ACP] + H2O. Its function is as follows. Involved in unsaturated fatty acids biosynthesis. Catalyzes the dehydration of short chain beta-hydroxyacyl-ACPs and long chain saturated and unsaturated beta-hydroxyacyl-ACPs. This is 3-hydroxyacyl-[acyl-carrier-protein] dehydratase FabZ from Rickettsia canadensis (strain McKiel).